The chain runs to 207 residues: Reticulon-1-A (207 aa).

The Reticulon domain occupies 21 to 207 (AIDLLYWRDI…AKIPGTKQKE (187 aa)). The next 2 helical transmembrane spans lie at 35–55 (IVFG…VVSV) and 139–159 (VLMW…LLIM).

Expressed in the animal hemisphere (presumptive neural ectoderm) of blastula and gastrula stage embryos, and along the anterior neural border, in the panplacodal primordium, and in the dorsolateral side of archenteron roof of late neurula embryos. At the tailbud stage, expression localizes to the central nervous system, including the spinal cord, prosencephalon, mesencephalon and rhombencephalon, as well as the lateral line placode, otic vesicle and pronephros.

It localises to the endoplasmic reticulum membrane. It is found in the nucleus. In terms of biological role, inhibits amyloid precursor protein processing, probably by blocking BACE1 activity. This chain is Reticulon-1-A (rtn1-a), found in Xenopus laevis (African clawed frog).